The primary structure comprises 104 residues: Alpha-amylase inhibitor HOE-467A (104 aa).

The first 30 residues, 1 to 30 (MRVRALRLAALVGAGAALALSPLAAGPASA), serve as a signal peptide directing secretion. 2 disulfide bridges follow: C41–C57 and C75–C103.

In terms of biological role, inhibits mammalian alpha-amylases specifically but has no action on plant and microbial alpha-amylases. Forms a tight stoichiometric 1:1 complex with alpha-amylase. The sequence is that of Alpha-amylase inhibitor HOE-467A from Streptomyces tendae.